The chain runs to 256 residues: NH(3)-dependent NAD(+) synthetase (256 aa).

ATP is bound at residue G29–S36. Residue D35 coordinates Mg(2+). R115 is a deamido-NAD(+) binding site. Residue T135 coordinates ATP. Residue E140 coordinates Mg(2+). Deamido-NAD(+) contacts are provided by K148 and D155. Positions 164 and 186 each coordinate ATP. H245–K246 serves as a coordination point for deamido-NAD(+).

It belongs to the NAD synthetase family. In terms of assembly, homodimer.

It catalyses the reaction deamido-NAD(+) + NH4(+) + ATP = AMP + diphosphate + NAD(+) + H(+). It functions in the pathway cofactor biosynthesis; NAD(+) biosynthesis; NAD(+) from deamido-NAD(+) (ammonia route): step 1/1. Catalyzes the ATP-dependent amidation of deamido-NAD to form NAD. Uses ammonia as a nitrogen source. The sequence is that of NH(3)-dependent NAD(+) synthetase from Methanosarcina mazei (strain ATCC BAA-159 / DSM 3647 / Goe1 / Go1 / JCM 11833 / OCM 88) (Methanosarcina frisia).